The chain runs to 346 residues: Zinc finger CCCH domain-containing protein 28 (346 aa).

A disordered region spans residues Met-1–Arg-99. A compositionally biased stretch (low complexity) spans Asp-17–Ser-41. The span at Arg-62–Gly-86 shows a compositional bias: basic residues. 6 consecutive C3H1-type zinc fingers follow at residues Asp-103–Pro-131, Asp-138–Pro-165, Lys-181–Pro-209, Glu-211–Ala-237, Asn-282–Leu-308, and Asn-314–Ala-340.

The sequence is that of Zinc finger CCCH domain-containing protein 28 from Oryza sativa subsp. japonica (Rice).